The following is an 80-amino-acid chain: Exodeoxyribonuclease 7 small subunit (80 aa).

The protein belongs to the XseB family. Heterooligomer composed of large and small subunits.

The protein resides in the cytoplasm. It catalyses the reaction Exonucleolytic cleavage in either 5'- to 3'- or 3'- to 5'-direction to yield nucleoside 5'-phosphates.. Functionally, bidirectionally degrades single-stranded DNA into large acid-insoluble oligonucleotides, which are then degraded further into small acid-soluble oligonucleotides. The polypeptide is Exodeoxyribonuclease 7 small subunit (Halalkalibacterium halodurans (strain ATCC BAA-125 / DSM 18197 / FERM 7344 / JCM 9153 / C-125) (Bacillus halodurans)).